Consider the following 491-residue polypeptide: Carboxypeptidase SOL1 (491 aa).

The first 25 residues, 1 to 25, serve as a signal peptide directing secretion; the sequence is MSKLRFFQSLLISTVICFFLPSINA. Residues 26–452 are Extracellular-facing; the sequence is RGGHSDHIHP…LLTQFFTETN (427 aa). N39 is a glycosylation site (N-linked (GlcNAc...) asparagine). The Peptidase M14 domain occupies 64 to 338; it reads GYMTNDDLEK…KSMLNLVASL (275 aa). 2 residues coordinate Zn(2+): H125 and E128. Substrate contacts are provided by residues 125–128 and 186–187; these read HGDE and NR. Position 226 (H226) interacts with Zn(2+). Residue N268 is glycosylated (N-linked (GlcNAc...) asparagine). Position 286 (Y286) interacts with substrate. E308 serves as the catalytic Proton donor/acceptor. A helical membrane pass occupies residues 453 to 470; sequence NGITLTLFVVVVFLCFLL. Residues 471–491 are Cytoplasmic-facing; it reads QRRVRFNLWKQRQSSRRSITV.

It belongs to the peptidase M14 family. Zn(2+) is required as a cofactor. Expressed in roots, shoots, leaves, flowers and siliques.

The protein localises to the endosome membrane. Its function is as follows. Possesses in vitro carboxypeptidase activity against the C-terminal arginine and lysine residues. Involved in the maturation of CLE19. Removes the C-terminal arginine residue of CLE19 proprotein. The cleavage of the C-terminal arginine residue is necessary for CLE19 activity in vivo. Is not involved in generating active CLV3. Is not involved in CLE19 or CLV3 perception. The protein is Carboxypeptidase SOL1 of Arabidopsis thaliana (Mouse-ear cress).